We begin with the raw amino-acid sequence, 190 residues long: NADH-quinone oxidoreductase subunit B (190 aa).

[4Fe-4S] cluster contacts are provided by cysteine 69, cysteine 70, cysteine 134, and cysteine 164.

This sequence belongs to the complex I 20 kDa subunit family. In terms of assembly, NDH-1 is composed of 14 different subunits. Subunits NuoB, C, D, E, F, and G constitute the peripheral sector of the complex. The cofactor is [4Fe-4S] cluster.

It is found in the cell inner membrane. It carries out the reaction a quinone + NADH + 5 H(+)(in) = a quinol + NAD(+) + 4 H(+)(out). Functionally, NDH-1 shuttles electrons from NADH, via FMN and iron-sulfur (Fe-S) centers, to quinones in the respiratory chain. Couples the redox reaction to proton translocation (for every two electrons transferred, four hydrogen ions are translocated across the cytoplasmic membrane), and thus conserves the redox energy in a proton gradient. This chain is NADH-quinone oxidoreductase subunit B, found in Hyphomonas neptunium (strain ATCC 15444).